The primary structure comprises 195 residues: Putative CheY-P phosphatase CheC1 (195 aa).

It belongs to the CheC family.

Its function is as follows. Catalyzes the dephosphorylation of CheY-P. The sequence is that of Putative CheY-P phosphatase CheC1 (cheC1) from Halobacterium salinarum (strain ATCC 29341 / DSM 671 / R1).